We begin with the raw amino-acid sequence, 520 residues long: Cyclic AMP-responsive element-binding protein 3-like protein 2 (520 aa).

Topologically, residues 1–379 (MEVLESGEQG…KLAGTQTGTC (379 aa)) are cytoplasmic. At Ser-93 the chain carries Phosphoserine. A Glycyl lysine isopeptide (Lys-Gly) (interchain with G-Cter in SUMO2) cross-link involves residue Lys-178. Ser-191 is subject to Phosphoserine. The disordered stretch occupies residues 195–264 (APVDHLHLPP…PHKLQGSGPL (70 aa)). 2 stretches are compositionally biased toward low complexity: residues 208–220 (SSHG…SLSP) and 234–255 (SPSR…LTAP). The region spanning 294-357 (ALKKIRRKIK…RTLLQQLQKL (64 aa)) is the bZIP domain. The segment at 296-325 (KKIRRKIKNKISAQESRRKKKEYMDSLEKK) is basic motif. Residues 336-357 (LRKKVEVLENTNRTLLQQLQKL) are leucine-zipper. Residues 380-400 (LMVVVLCFAVAFGSFFQGYGP) traverse the membrane as a helical; Signal-anchor for type II membrane protein segment. The Lumenal portion of the chain corresponds to 401-520 (YPSATKMALP…ELDRRVNTTF (120 aa)). The S1P recognition signature appears at 427–430 (RNLL). 3 N-linked (GlcNAc...) asparagine glycosylation sites follow: Asn-480, Asn-504, and Asn-517.

The protein belongs to the bZIP family. ATF subfamily. Binds DNA as a dimer. Post-translationally, upon ER stress, translocated to the Golgi apparatus, where it is processed by regulated intramembrane proteolysis (RIP) to release the cytosol-facing N-terminal transcription factor domain. The cleavage is performed sequentially by site-1 and site-2 proteases (S1P/MBTPS1 and S2P/MBTPS2). N-glycosylated. In terms of processing, ubiquitinated by HRD1/SYVN1; undergoes 'Lys-48'-linked ubiquitination, followed by rapid proteasomal degradation under normal conditions. Upon ER stress, SYVN1 E3 ubiquitin-protein ligase dissociates from its substrate, ubiquitination does not occur and CREB3L2 is stabilized. As to expression, widely expressed with highest levels in placenta, lung, spleen and intestine, and lowest levels in heart, brain, skeletal muscle, thymus, colon and leukocytes. In fetal tissues, the weakest expression is detected in brain and heart.

It localises to the endoplasmic reticulum membrane. The protein localises to the nucleus. In terms of biological role, transcription factor involved in unfolded protein response (UPR). In the absence of endoplasmic reticulum (ER) stress, inserted into ER membranes, with N-terminal DNA-binding and transcription activation domains oriented toward the cytosolic face of the membrane. In response to ER stress, transported to the Golgi, where it is cleaved in a site-specific manner by resident proteases S1P/MBTPS1 and S2P/MBTPS2. The released N-terminal cytosolic domain is translocated to the nucleus to effect transcription of specific target genes. Plays a critical role in chondrogenesis by activating the transcription of SEC23A, which promotes the transport and secretion of cartilage matrix proteins, and possibly that of ER biogenesis-related genes. In a neuroblastoma cell line, protects cells from ER stress-induced death. In vitro activates transcription of target genes via direct binding to the CRE site. The protein is Cyclic AMP-responsive element-binding protein 3-like protein 2 (CREB3L2) of Homo sapiens (Human).